The sequence spans 435 residues: Xylose isomerase (435 aa).

Mg(2+)-binding residues include Asp-306 and Asp-308.

This sequence belongs to the xylose isomerase family. Homotetramer. Mg(2+) serves as cofactor.

It is found in the cytoplasm. It carries out the reaction alpha-D-xylose = alpha-D-xylulofuranose. The protein is Xylose isomerase of Brucella melitensis biotype 2 (strain ATCC 23457).